The chain runs to 96 residues: Large ribosomal subunit protein uL23 (96 aa).

Belongs to the universal ribosomal protein uL23 family. In terms of assembly, part of the 50S ribosomal subunit. Contacts protein L29, and trigger factor when it is bound to the ribosome.

One of the early assembly proteins it binds 23S rRNA. One of the proteins that surrounds the polypeptide exit tunnel on the outside of the ribosome. Forms the main docking site for trigger factor binding to the ribosome. The protein is Large ribosomal subunit protein uL23 of Clostridioides difficile (strain 630) (Peptoclostridium difficile).